Consider the following 397-residue polypeptide: Presenilin-like protein At2g29900 (397 aa).

Residues 1–17 (MDRNQRPRSILDSLGEE) are Cytoplasmic-facing. The helical transmembrane segment at 18–38 (LIAILTPVSICMFTVVLLVCI) threads the bilayer. At 39-76 (LNSDPSSSSASFSSIATAAYSESDSDSSWDKFVGALLN) the chain is on the lumenal side. A helical membrane pass occupies residues 77–97 (SVVFVAAITVATFVLVLLFYL). Residues 98–106 (RCVKFLKFY) are Cytoplasmic-facing. Residues 107–127 (MGFSAFIVLGNLGGEILVLLI) form a helical membrane-spanning segment. The Lumenal segment spans residues 128-135 (DRFRFPID). A helical transmembrane segment spans residues 136–156 (SITFLILLFNFSVVGVFAVFM). The Cytoplasmic segment spans residues 157–158 (SK). The chain crosses the membrane as a helical span at residues 159 to 179 (FSILITQGYLVWIGVLVAYFF). The Lumenal portion of the chain corresponds to 180–188 (TLLPEWTTW). A helical membrane pass occupies residues 189-209 (VLLVALALYDIAAVLLPVGPL). Asp-198 is a catalytic residue. Residues 210 to 305 (RLLVEMAISR…NSETFLEGIG (96 aa)) are Cytoplasmic-facing. The chain crosses the membrane as a helical span at residues 306–326 (LGSSGAIKLGLGDFIFYSVLV). The active site involves Asp-318. Topologically, residues 327-336 (GRAAMYDLMT) are lumenal. Residues 337 to 357 (VYACYLAIIAGLGITLMLLSV) traverse the membrane as a helical segment. Topologically, residues 358–366 (YQKALPALP) are cytoplasmic. The short motif at 363–365 (PAL) is the PAL element. The helical intramembrane region spans 367-387 (VSIMLGVVFYFLARLLLEVFV). At 388–397 (VQCSSNLVMF) the chain is on the cytoplasmic side.

This sequence belongs to the peptidase A22A family. In terms of assembly, homodimer. Probable component of the gamma-secretase complex, a complex composed of a presenilin homodimer, nicastrin, APH1 and PEN2.

It is found in the endoplasmic reticulum membrane. Its subcellular location is the golgi apparatus membrane. Functionally, probable subunit of the gamma-secretase complex, an endoprotease complex that catalyzes the intramembrane cleavage of integral membrane proteins such as Notch receptors. In Arabidopsis thaliana (Mouse-ear cress), this protein is Presenilin-like protein At2g29900.